The primary structure comprises 304 residues: Probable aquaporin NIP5-1 (304 aa).

The next 2 membrane-spanning stretches (helical) occupy residues 80-100 (LGAE…GPIV) and 106-126 (GAET…IIIL). The short motif at 137–139 (NPS) is the NPA 1 element. Transmembrane regions (helical) follow at residues 157–177 (AYIA…KGVF), 195–215 (AFAL…AVAT), and 219–239 (AVGE…ILVA). Residues 248 to 250 (NPV) carry the NPA 2 motif. Residues 266–286 (WVYLVAPTLGAISGAAVYTGV) traverse the membrane as a helical segment. Phosphoserine is present on serine 301.

This sequence belongs to the MIP/aquaporin (TC 1.A.8) family. NIP (TC 1.A.8.12) subfamily. Expressed in rosette leaves.

It is found in the cell membrane. Functionally, boric acid transporter. Low water transport activity. Plays an important role as plasma membrane boric acid channel for the boron uptake required for plant growth and development under boron limitation. This is Probable aquaporin NIP5-1 (NIP5-1) from Arabidopsis thaliana (Mouse-ear cress).